The following is a 513-amino-acid chain: Probable E3 ubiquitin-protein ligase XBOS34 (513 aa).

3 ANK repeats span residues 39-69 (EGKTPLMVASMRPDLINVVQVLIELGANVNA), 75-104 (YCGTALHHAAKKGLEQTVHLLLSHGANPFI), and 108-137 (DCHTALDLAREKGHVNVVRAIEGRISLFCG). Polar residues-rich tracts occupy residues 309–327 (ITTTTATNDWGNPPSNSLN) and 335–355 (SAPSKTSGQVPVVTSSSSTYN). Disordered stretches follow at residues 309 to 378 (ITTT…QNST) and 423 to 455 (SADGGTAVSSAKPAENEGDAKPAESDANASNSG). Positions 361 to 378 (GTSSGQSSSKHNKSQNST) are enriched in low complexity. The span at 436 to 446 (AENEGDAKPAE) shows a compositional bias: basic and acidic residues. An RING-type zinc finger spans residues 462 to 501 (CVICLDAPVEGACIPCGHMAGCMSCLKDIESKKWGCPICR).

It catalyses the reaction S-ubiquitinyl-[E2 ubiquitin-conjugating enzyme]-L-cysteine + [acceptor protein]-L-lysine = [E2 ubiquitin-conjugating enzyme]-L-cysteine + N(6)-ubiquitinyl-[acceptor protein]-L-lysine.. Its pathway is protein modification; protein ubiquitination. This chain is Probable E3 ubiquitin-protein ligase XBOS34 (XBOS34), found in Oryza sativa subsp. japonica (Rice).